The chain runs to 754 residues: ToMV resistance protein Tm-1(GCR237) (754 aa).

Positions 1 to 201 (MATAQSNSPR…AGMVIGRLES (201 aa)) are N-terminal inhibitory domain NN. ATP contacts are provided by residues 18 to 20 (DTK), T55, R92, and 124 to 127 (GSGG). The N-terminal inhibitory domain NC stretch occupies residues 211-431 (KFTVGVTMFG…VDSFLEISPK (221 aa)).

This sequence belongs to the UPF0261 family. As to quaternary structure, homodimer. (Microbial infection) Binds, via an ATP bridge, to the tobamoviruses avirulent (Avr) replication proteins (large and small subunits, e.g. tomato mosaic virus (ToMV/TMV) AC P03587, tobacco mild green mosaic virus (TMGMV) AC P18339 and pepper mild mottle virus (PMMoV) AC P89657) to inhibit their function after the translation of tobamoviruses RNA, but before the viral replication complex formation on the membrane surfaces; this interaction is not possible with resistance-breaking strains replication proteins.

Its function is as follows. Inhibitor of viral RNA replication which confers resistance to some tobamoviruses including tomato mosaic virus (ToMV) (e.g. isolate L), tobacco mosaic virus (TMV), tobacco mild green mosaic virus (TMGMV) and pepper mild mottle virus (PMMoV), but not to resistance-breaking isolates of ToMV (e.g. LT1, SL-1 and ToMV1-2) and tomato brown rugose fruit virus (ToBRFV). Prevents tobamoviruses RNA replication by affecting the association of tobamoviruses replication proteins (large and small subunits) with host membrane-associated proteins (e.g. TOM1, TOM2A and ARL8), thus inhibiting the replication complex formation on the membranes and avoiding viral negative-strand RNA synthesis. Inhibits triphosphatase activity of ToMV replication proteins. In Solanum lycopersicum (Tomato), this protein is ToMV resistance protein Tm-1(GCR237).